We begin with the raw amino-acid sequence, 514 residues long: Serine/threonine-protein kinase 33 (514 aa).

The span at 65-86 shows a compositional bias: basic and acidic residues; that stretch reads INRDITSRKDLPSRTSNVERKA. Positions 65-91 are disordered; that stretch reads INRDITSRKDLPSRTSNVERKASQQQW. Residues 116-381 enclose the Protein kinase domain; sequence YTFGRILGKG…AKELLDNQWL (266 aa). Residues 122–130 and Lys145 each bind ATP; that span reads LGKGSFGIV. Asp238 (proton acceptor) is an active-site residue. Disordered stretches follow at residues 402–468 and 485–514; these read KNNP…DMCS and MEKT…KKKL. Ser407 carries the phosphoserine modification. The segment covering 413–426 has biased composition (basic and acidic residues); the sequence is TEEKNKPSTEEKLK. A compositionally biased stretch (polar residues) spans 449-468; that stretch reads STAYEKQFPATSKDNFDMCS.

It belongs to the protein kinase superfamily. CAMK Ser/Thr protein kinase family. CaMK subfamily. In terms of assembly, homodimer. Autophosphorylated. Highly expressed in testis, fetal lung and heart, followed by pituitary gland, kidney, interventricular septum, pancreas, heart, trachea, thyroid gland and uterus. Weak hybridization signals were observed in the following tissues: amygdala, aorta, esophagus, colon ascending, colon transverse, skeletal muscle, spleen, peripheral blood leukocyte, lymph node, bone marrow, placenta, prostate, liver, salivary gland, mammary gland, some tumor cell lines, fetal brain, fetal liver, fetal spleen and fetal thymus. No signal at all was detectable in RNA from tissues of the nervous system.

It localises to the cytoplasm. Its subcellular location is the cytoskeleton. The protein resides in the perinuclear region. It carries out the reaction L-seryl-[protein] + ATP = O-phospho-L-seryl-[protein] + ADP + H(+). It catalyses the reaction L-threonyl-[protein] + ATP = O-phospho-L-threonyl-[protein] + ADP + H(+). Specifically inhibited by CDD-2807 ((3-([1,1'-Biphenyl]-2-ylethynyl)-1H-indazol-5-yl)(2,6-diazaspiro[3.5]nonan-2-yl)methanone). In terms of biological role, serine/threonine protein kinase required for spermatid differentiation and male fertility. Promotes sperm flagella assembly during spermatogenesis by mediating phosphorylation of fibrous sheath proteins AKAP3 and AKAP4. Also phosphorylates vimentin/VIM, thereby regulating the dynamic behavior of the intermediate filament cytoskeleton. This chain is Serine/threonine-protein kinase 33, found in Homo sapiens (Human).